We begin with the raw amino-acid sequence, 171 residues long: MNDLNELKKYIQDVKDFPIKGIVFKDISPLLANGEIFRIVVEKMAEKVREVDVIIGPDARGFIFGAAVASYLKKPFVMIRKEGKLPHNTIKIDYKLEYGMGSLEIQKDLIKPGQSVAILDDVLATGGTTKASVELVKKLGAKVTKAVFLMELEFLNGKEKINAEVISLLKY.

It belongs to the purine/pyrimidine phosphoribosyltransferase family. Homodimer.

It localises to the cytoplasm. It carries out the reaction AMP + diphosphate = 5-phospho-alpha-D-ribose 1-diphosphate + adenine. It participates in purine metabolism; AMP biosynthesis via salvage pathway; AMP from adenine: step 1/1. Its function is as follows. Catalyzes a salvage reaction resulting in the formation of AMP, that is energically less costly than de novo synthesis. The protein is Adenine phosphoribosyltransferase of Mycoplasma mobile (strain ATCC 43663 / 163K / NCTC 11711) (Mesomycoplasma mobile).